The chain runs to 9518 residues: MAIEAVEAQHRITGSQCQDPVELSLAAIRIWALQVLEWFNDNPASIKIGHAAPGGNTTFTMELNVQGDATDVVQITQDKEAQDLAWKCQEANLALVASMQVSGDPEASTLLVLYFMGDKGSRVKFDTTKTVHELEIHGWVHPAGIDMKIFPVVESARKLALQLAERLEARTPQPTVTGDMSDMPISEDDLGTIWGWNSQAAAPVERCVHDLISERARETPNAPAVCAWDGELDYEQLDKLSSRLAHYLLQLGVSPTHFVPLCFEKSVWMMVAILGVMKSGAVISTMDPTQPEDRLRTIVQQLRSAWVMCSPAQRDVATRLGASTVITLDHSLIQSLPPLGCSKLPSVDPASTLYVVFTSGSTGTPKGAIINHINFSSAITYQHEALGLSNTARVFDFASYAFDLAWGNIIHTFAAGACLCIPRESERRGDIAAAMRRLRVNHVQLTPSVARLIDPNDVPSLRLILLIGEPMSQADVDQWTPHCTLINSYGPAECTVAVTFQKISPDGSWDGSMGTGVACNTWVVDVSGESLVPPGGTGELWLEGPLVGQGYLGDSEKTIASYVETPLWLAQGAPDYPGRRGRLYKTGDLVRYNKEGRLVYVARKDDQVKVRGQRVELAEVEWHLKQALPDPTIPVVAEVITPSGGKSAILVAYLALGPEFKQDMDRVRNELHRYTNGVSETLAQQLPQYMVPSLYIPVPEIPMTGTGKTDRRRLRETSSSMTMQQLVEMQPSQGERCAPRTEMEWRLQQLWALSLGIDAESIAVGDSFLQIGGDSVAAIRLVQLARKEAVVLTVADVFNLPRLCDLAEVARLEQPKHVDIPPFSLLPKFDSAPSNACALAAAECGVPAESIADLLPCSPLQEGLLALTGKRPGDYIRCLTMELPSDVDLARFRHAWSKVVQTASVLRTRIVEVPTLGLLQVVLVEEPEWRESDEDLISFVQSEKESYMGLNTHLTRFGLVKDEYQKVSFIWTIHHALYDGWSMPLLLEQVESEYWHGDCETLAPFNSFVKYLTDSGEGAEEYWRSQLDGIEAPIFPSLPSPGYQPQAHNQLEHQVLNIDWPGNNITASTVVRAAWAILTSRYTHSSDVIFGATLTGRQAPVPYIERIAGPTIATVPIRVSVDGELGVATLLQNLQKQAVDMISYEQTGLKRIRHINSDADHATQFQTLLVVQPAARKTSRLLDERLFPEDPYDGENELASINTYALVVECHLEPNGMLLRMSFDSQVIEVHQADRMARQFEEVLRQISRENAAENLIKAVDAASPEDLAQIWRWNKKVPPVIEGCVHDLIAQRVQEQPDRPAVCAWNGQLTYEELGLHSTNLARFILSLGAGAGPGAVIPICFEKSMWTPVAMLAAIKTGGMSVTVDPSQPQERLQLIMQQTKPPLILTSPMYKSLAARLATQVIIVDAEALKGMAPSIPNNFTMPSINPASGLYIAFTSGSTGTPKGAIMTHENVRSAIDYQNEIMGTDLHSRLYDFTSYAFDVAWLNFFHAFTAGGCLCIPSDAQRKDDIPGSMDQLEANYMLLTPSTARTLDPKTLPGLKTLILVGEAVTGEDLRKWAPNVTLKNGYGPAECTGLSTIHTYEGSGDQPNTVGFAVGLRPWIVEPVHGTCLAPLGAIGELWVEGPLVGGGYLNDPDHTAESFVRDPPWLLRGGPSCPEKARQGRLYKTGDLVRYNPNGSLAYVGRKDTQVKIRGQRVELEEVESYLRQTIPGGTANTVIADMVTLRGSSSPTLVVYIALGEAATQAPESVRAELSRYTHGVVETLGELLPSYMVPNLYIPVKDIPISTTGKTDRKRLRQLGSSMRLEELLELQSRREKRLPQTELERRLRDLWADVLNIDVCHIGVDDGFFSLGGDSISAMQVSAKSRQLGFRITVNDIFKSKTIGRLAHCSQTEQALEVKASEQLDTTFALSPIQQLFFDSQPSTYGHFNQSFFLRISRSQNSDDVLHAVESVVTCHSMLRARFHQEPNGRWVQRVTPSTGKSYNYHQARVSSLDDAIPALNISQQSLDIQNGPVFAANLIDTGDMQYLFLVAHHLVIDLVSWRIILHDIEQMLTKSSVSSLPSCASLPFQTWCQLQASYASENLAPNIALPFDIDPPCIDYWGLDQAQNSYDNIVEQGFAISKSTTDLLLGAANLAFQTQPVELFQAALLHSFMQVFDDRTIPTIFTEGHGREPWDHALDLSRTVGWFTTIAPTAVTASTNLSIAEVVVRTKDGRRRTPGNGWPYFTSRYLNAAGKKSFGVSHCHEIVFNYFGLYQQLEKADALFQPCETLAGRVPDVAGHMHRFALVDVAAEVTHGCLRFDFQYNRHMQKQPAIREWITECQRSLEVVAKELILLQPRYTVSDFPLLPQTEATRRKVESLPDLGISFGEIEDIYPCSPVQQGIFLSQAKNPDLYQTRVRWCVQSVDPQSAVDAQRLARSWCQVVARHGALRTIFTQSVVSDGYSDQIVLKEVSPPIHILPPHHPKEGMAAVAGYQKSVGDRDRSLHSLLLCPTSEGSVYCQLDINHAIIDAISIGIIKQDLRAAYDGTLPSEPAPVYSNYIQHIQSSSSSEAREYWKRRVVGAEPCIFPVLNQNQAEPNARGIASLPVTQEIYDSLRSFCRIHGLTPSNVLHLAWGLVLRCYTSNESVCFAYLSSGRDVPVDRADGVVGPFINILVSHAKITSDRSLLSIMQANQAEYLEGLEYQHFPLAEVRHYLNADAESFFNTALSVQSGGLSQQQDPSGISFDEETWDDPNEYDMATSVFLREDDAQVSINYSHKLLSETQAASVAGSFLEALRVIINKPSASVDNLQIASSQDIDAIWNWNRQVPKRVSSSVTDLIVARIQQQPEAPAVCSWDGELTYRDLDRLSSRLAQQLLGLGIAPRSIIPLCFEKSMWVPVAMLAVMKAGCAVVGMDPEQPKERLQLIIAKTQPALILTSPRQRDLAQSLLGMVVTVTLDSLPAAHISDKYGFPPSDPTDTLFVAFTSGSTGTPKGAIISHENMCSAITHHADACGITTSSRVFDFASYAFDAAWFNFVYPLVVGGCMCIPSDEQRTNRVAECMEQMRVNYALFTSSMARTIDPTTVPSLETLVLGGEALGAEDMDIWKHINLKGAYGPAECTIIATFNDFKHRNEHPRTLGHTVGLTAWVVEPLRSKSLVPIGAIGELWLEGPLVGPGYLRDPEKTSASRAEDPAWLVHGTSRHPGRRGYLYKTGDLVQYREDGALVYINRKDNQVKIRGQRVELGDVEYHARRALSANATQDLVVEVIYPKGRNNPILVAFISLGEQASGSAESIREALALCTKGVEESLKQHLPSYMVPSMYVPVAEIPLTATAKTDRRRIQQIGSSLTLEQLAELQPSRRKARAPATASEQRLQKLWATVLERETSSISADDSFLRIGGDSIGAIRLAQLAADHGLMLTVATIFKSPTLCDMAQTLKVESVSEQVIQPLSLLKLQIDSDQALKQAAAQCDLEVSSIEDVLPCTPLQEGLLSLTVKRPGAYVIRQVLRLHDQIDVQRFRNACNYVATSTAILRTRVIDLHEQGLVQVVTKQIPEWQESTSLAAFLRLDEQNPVGLGTALARFALVHDRVDDRIYSVWTLHHALYDGWSMPLLLKEVEKAYFGVKTEGLGSFAGFVKHITELGAETDEYWKNEFDGLLAVQFPVLPSPHYQPQAQEVMHHEITNLQWLQDNTTPSTAIRAAWSVLVSHYTQSSDVIFGSTVTGRQASIPKVELVEGPTIATVPIRVEIQEKATVANLLEQIQKQSVDMIPFEQAGLQRIRRLSPETEQGCAFQTFLVVQPAPQPAKAEHDDWIFEEQSNDYTPGSINNFNSYALLLECQLTADGVSINISYDAHIVTQVQVETIAGQFEHVLRQVCKEASQYLEVKDIEAASEDDIRRIWDLNSPTPRAVETCMHDLILQQAHQRPNASAICGWDGELTYGQLDDLSTRLAHRLVEAGVQPGAIVALCLEKSMWMPVAMLGVVKAGATGVTMDITQPEERLRLIVDQVQPPLIVSSVEAKNLASRLTEKAVLVISEEALEHQLRPQMVTKKGLPPVQSTAGLYVAFTSGSTGVPKGALMTHGNVASAVYHQQAVLGYKPTDRVFDFSSYAFDAAWFNFLHTMAAGACLCIPSEDERRSDVTECMRRMRVTYAAITPSTARLINPASVPELRCLLLGGETVSKQDITQWCPFVNLINIYGPAECSAISTTFTYGDSDHPSGTIGAGRGMATWVVEPSRGRHLSPYGAVGELWLEGPLVGAGYVGRPDINATTFIHDPPWLLRGGAGISGRRGRLYRTGDLVRYNSDGTLLYVGRRDAQVKIRGQRVELTEVEHYLYESLPTGSRSTPFAVEVITPRETNNPILVAFFGMGQLEWGSTEVVREALRKHTQDVQAQMAELLPSFLVPGIFIPVAEIPVTATGKIDKRSLRQLGEQSSLDELVALQPTQGERQTPTTITECRILELWAKTLNVNPERISIHDDFFTLGGDSISAMQLSAKSRSTGLQITVPAIFKHRTIARLAACTTPVDQIMNQSTERTGVPFALSPIQQLFVNTQQGADNHFNQSFLVRITQSTSSDQLKRAIEAIVAHHSMLRARFKSTPENIWTQQILPSSAGSYIFSSHEVISFQDSSDIVTRSQTSLDIENGPLLAVDLLNTQKDGQYLFLVAHHMVIDLVSWRILLADLEEYLTTGTLSGFVPMSFQTWCELQADYARAHLFPKDVLPFSPEPPQYDYWGVAPSTNTFDNLAKGSVILSKEVTEILLGSANAAFNTQPVEILHAALLHSFTKAFHDRSPPSIFSEGHGREPWTSSIDLSRTVGWFSTIYPVVATVDPDEKISALARRIKDTRRCVPQNGWSYFTSRYLNPTGKKDFQINGPVEVIFNYLGLYQQLERQDSLFHVSEMPVDVHELSDIASKLCRFALIDISASVLQGRLRVDYLYNNRMRNQEGIRKWIQECQCSLEDAAQELPSLQPTYTICDFPLLHMSELGLEKLGSALADAGVSYGQVEDIYPCSPIQQGILMSQVKNPSLYQTTIKWLAESTDKGSSLDVSRLKKAWQLVVDRHPMLRTKFIDSLMPDGLKDQLVLKSLEAEVHVITSGQRDASDTAIPRENNAFLLIYTTPSGAVCELLINHALIDASSLVILKQELCAAYDGSLSNSMPGLYSEYILFLQSLSEQKAHEYWHHLLEGVNPCIFPSLGARNPRGPRSKSVISRKLDPNMHDLLRLFCMDHGLTTSNVFHIAWGLVLRAYTGLETVCFGYLTSGRDIPVSGAERTIGPFINMLTSRVSLESNESLLSLAQKNQGQYLSSLEFQHYPLAKIFHFLDLPGKELFNTALSVQANRLVSNNTASSISLTEMGGDDPTEYDIMMNIGLDENEIAINFTYNASMLSTSHAENVLNLFIQAVRQTITHSDQTPHQANLISKEDLRRILNWNAMAPAAVNASIGDMISEQAQNQPDAPAVCACDGDLTYKELDYLSTRLASHLHGLGVTPGSMVPLLFEKSMWMSVAALAVIKSGGAMVGLDIEQPQDRLRTILEQTQGSVIVTSPTMRSKGNSLGMDTVVIVDRASMDQLEPVRGTVLPSIDPASPLYIVFTSGTTGTPKGVVISHCNVASAITYQQDSLGLNSASRVLDFVSYAFDVAWGTILHTFVAGACLCVPEESERRGDIGAAMRRLQVNYAVLTPTIARLLDPQSIPLVQTMVLTGEPLDPIDVQKWALQTQLVNAYGPSETTIWATLERYPFSENEPSLGRGKGCVTWVVDPNREAQLCPIGCTGELWLEGPIVGLGYLNDTDKTAASFLPAPTWLTQGESSRRPGRLYKTGDLVRYNLDGTLIYAGRKDGQVKIRGQRVELGEVEYHIQQAMPTGTGVPVVAEVITPKASANSLLVAYLALGDRATGSTEGIRNALSYYTNIFTQCLPESLPGYMVPNIYIPVTEIPMTTTGKTDRRQLRTIGSDQTLAQLAELQPSRGKERVASSPVELALQRLFSEVLNIDLDIVGTDDSFFLLGGDSITAMQLSARSQSVDFYITVADIFKHKTVAQLAKNSGLQAAETSSIHIAETVDTPFELSPIQRMFFDFQDIRKNMFNQSFLVRVSRPHLPDQVKEGIEQLVVRHSMLRARFIQVDGAWTQKILADATCCYEFQRHDIPSLHEAKSLLNQSQQILDIEQGPIFVVYLINTNDEGQFLFMVAHHLVVDLVSWRILLGELEEYLVHGKVAGPAPLSFQAWCQLQADHAVNRSPAEDFPYDVPPLMYDYWKFTPGVSPNTIGDTTQCSIVIEKSLTDQLLGSANTVFNTQPVEILHAALLYSFAQSFPDRVSPAIFTEGHGREAWNSAIELGRTVGWFTTVYPVVVDAIKSDRLIDIVRRSKDYRRQIPANGRPYFASRYLNPAGRQAFHLDGPVEIIFNYFGLYQQLERKDALFQQSDVLISDLMEAAPELSRFALIDVAAYVAQGKLHVDFLYNRHLQHGSKIRDWIIECEHSLVMAAHQLPLLSPSYTACDFPLMPLGESSLHLLINEALPGLGLTFGQVEDIYPCTPIQEGILTSQAKNPALYWTRVRWLVSSTTGSLVDRNRLGRAWQQVVDRHPILRTIFIDSVRSGGVKDQVVIKNVKSDVQLLGTDKPADPLTGVQWHTDVASKRDSPQHALALSQSASGSVFCDLEINHAMVDAYSLGLLKYEISRAYMGQISSEAGPSYEAYVRHIQSLPASAEQFWAEYLNEVPACNFPVLAEPNPDHTNSRETLSLDMDIKTHLALRKFCQQYEMTPSSVFHLAWGLVIRAYTGLDTVCFGYLTSGRDIPIPGVDRAIGPFINMLVSRINLSKGSSALETLQEDQRDYLAALQYQHTPLAKILEISGRPGKGLFNTGISVQNNASAQEPEPQEVIFTDVGGLIPPSTSLLSTDGSQRIATLFLQAVEGVIHNPNQVPRDINLVSEQDIQQIWSWNAQVPQAVKTCVHDLIAKQACLRPNSSAIHAWDGDATYKELDHFSSRLAHHLVDLGIRANDAVPLCFEKSMWMPVAALGVIKAGGACVALDTTQPEERLRGILQDIQPSFVLSSRANEHLTRRITDTHVLFVERPLFPQLPVPSCSDLPVVTPSSPVYVVFTSGSTGKPKGTAISHTNFASAIVHQPDLLALNPDARVFDFVSYAFDVAWSNILHTFAAGACLCIPSESVRREGTAQAMDAMKVTHVQFTPSMARTIDPNQVTSLRTLILGGEALSKQDIRLWAPRVDLRVAYGPAECTVAAAMTNVTQESGQVGKIGHGVGLNTWVVGLSEDAGLVPVGAVGELWLEGPLVGLGYIGQPQKTAESFVQDPKWLMNGPRGRSGRVYRTGDLVRYNPDGTLVYVGRKDSQVKVRGQRVELEETEYHIHAALSDGIGAVADVISPQGSANAMLVAYLDVGVTVDASLETIHAAMRPYTTGLADSLAQCLPQFMIPTMYIPVAGIPMTLTGKTDRRRLRSIGSSLSLDRLADIQPTRGQRQLPRTEVEMQLQQLWAEVLNIDPQQIGAHDSFFSLGGDSISAMQLSAKSRSAGLRVTVPDIFKLATIAGLAPSAASQAQKVYDWECTEGEAFELSPIQQMFIQTSQCNHFNQSFFLRITRPVSSTDVRRALEAVVTEHAILRVRFDHIVDEQWTQRVIPYSPECYKYEQHTIESFSDVSPILDRSQKSLDIQAGPIFSADLIDTGTQGHYLFLVAHHLAIDLVSWRIILADMEEHLTTNKISGFKPLPFQAWCQLQSEYARDQLPPEAAFPVEIPPPQDYWGLDPTTNTMGNTIHSTFSLSKDDTDSLLGCANMAFDTQLVEILQAALLHSFVYTFQDRPAPTIFSEGHGREPWDSAIDLSRTVGWFTTMSPTLVSASALSNDSLQTVVRRTKDGRRQVPGHGWPYFTSRYLNEKGKKVFGGYGAPEITFNYLGFYQQLEREDSLFAPASPPEGTLSDVAEDMGRFALIEVMASVSAGCLEFSFMFNCNTRHRDQIGTWITRYEHSLQTAARELPHHPRSYTQCDFPLLSLSETALLKLNDKILPGLGLSYGQVEDIYPLTPIQQGILLSQAKSPHLYWTRIRWLVQSASPSSVNLDRLVEAWKRVVSRHSALRTVFVESPSPHRFEDQLVMRTCEPTIHLLSSSDPPAALARHWESRQEPKPLHSLVICSTPSGDNVLCDLEMNHAITDATSTALLKREICAAYDDLLDATPGPLYRDYIRHIQSVGTEASLEYWKDYLEGVPPCIFPSQREPQSGENKARASMTQLLDGDLHSRLRSFCQKNEFTPANLFHLAWALLLRCYTGSETVCFGYLLSGRDVPVEGVEKTVGPFINLLVSRLHLGGSEPLAAVIERNQAEFVSSLNHQHSSLVQILRSLDEPVDALFNTVLSVQGMDLKSHDKDDLFSLRLDEQDGHDPTEYDIMLNVGLGSEETAITFSYYGSLLSDQQARNLVQSLLQAIEEIIRTPSKTAAQVDLAGRHDQEIIWNWNCAVPPTVDTPVHELIAMQCQQRPDATAICAWDGEFTYQELDCLSTRLALHLGALGVGANSIVPLYFEKSRWMPVSVLAVMKAGGASVAMDANQPLERLRAIVQQVQPEVLLSSRENYPVAHRLGAQRVVPVHDAALSSVIVPADTVCPSIAASQRLYVTFTSGSTGTPKGVVISHSNFSSALVQQQESLSFGPNVRVFDFVSYAWDVSWSNLLRSLVAGGCLCIPHESQRRANIEKAMCDFRVNYATITPTVARLLNPAEVPYLNTLALIGEPLTQADLVQWTPHVGEIINTYGPSECPGCVTVNRIRRDCLQDPHLGSASACNTWIVDPTDADRLLPVGGIGELWLEGPLIGLGYLGLPERSAENFIENPSWLRRGGPGCSGRDGRLYRTGDLVRYNPDGSLVYISRKDAQVKIRGQRVELGEVEYHVRQGILDIDDASVVAGVMTPRGSSSPMLVCFLGLGDLASGSADQIRAVLGERTRGLDEYLGARLPRYMVPSTYIPVVDIPMTVTGKTDRRRLTQAGASRTLAELAELQPSRGECQPLTTEMEWRLQGLWAAVLGLDASLIAADDSFLRIGGDSITAIRLGQRASEEGFSLAVPDIFNNPRLCDMAHYLREGQSIYRDPQPFSLLSCPPGSLPSFLETSVLPFLEWNKDHITDVYPTTELQDLYVSSALAARMGEIEHIYMDLPAGVDLSRVHQSCLRLWQHLDILRTVFIVDGHRHIQVVLNDVEPDISAHEVHGDLTACAEKIYRSDLQSPQQLGRCFTRFFIIHNPDGQARLTIRFSHSQYDGFSLPLIFSCFATLYRGEALPSSPKFSGYIRHVQEQQQAARPYWRSLLLQSSITPVKPLSAANGDYPLSQHVGSLVESKTIAPAPAGRQGFTAATIFTSLCARMLSRITGATDVVFGQIVSGRASLPSSLQNVVGPCVNTIPVRVRIIPGQGLEQQLASVHEQHIQGLPYETSQFGDIAVNCTDWPDESRTPELVVQFQNLDNLEHDAGTSILGANSTLAAYQRKGRPVFPDFIFVLAKPKGDGWELSVSGSSKFHTQHTLDTVLDELTRQVVDC.

The segment at 214-611 is adenylation 1; that stretch reads ERARETPNAP…ARKDDQVKVR (398 aa). In terms of domain architecture, Carrier 1 spans 738-814; that stretch reads APRTEMEWRL…DLAEVARLEQ (77 aa). An O-(pantetheine 4'-phosphoryl)serine modification is found at Ser775. Positions 853 to 1250 are condensation 1; the sequence is DLLPCSPLQE…EEVLRQISRE (398 aa). The interval 1292–1695 is adenylation 2; it reads QRVQEQPDRP…GRKDTQVKIR (404 aa). The Carrier 2 domain maps to 1822-1898; it reads LPQTELERRL…RLAHCSQTEQ (77 aa). Ser1859 carries the O-(pantetheine 4'-phosphoryl)serine modification. Residues 1911 to 2336 are epimerization 1; sequence TFALSPIQQL…QRSLEVVAKE (426 aa). Residues 2376–2803 are condensation 2; that stretch reads EDIYPCSPVQ…DNLQIASSQD (428 aa). Residues 2829–3224 form an adenylation 3 region; that stretch reads RIQQQPEAPA…NRKDNQVKIR (396 aa). The Carrier 3 domain maps to 3352–3428; that stretch reads APATASEQRL…DMAQTLKVES (77 aa). Position 3389 is an O-(pantetheine 4'-phosphoryl)serine (Ser3389). Residues 3465-3869 form a condensation 3 region; sequence EDVLPCTPLQ…QVCKEASQYL (405 aa). The interval 3906–4307 is adenylation 4; the sequence is QQAHQRPNAS…GRRDAQVKIR (402 aa). Positions 4436 to 4512 constitute a Carrier 4 domain; the sequence is TPTTITECRI…RLAACTTPVD (77 aa). Ser4473 is modified (O-(pantetheine 4'-phosphoryl)serine). The tract at residues 4527–4954 is epimerization 2; that stretch reads ALSPIQQLFV…EDAAQELPSL (428 aa). The condensation 4 stretch occupies residues 4990–5411; that stretch reads VEDIYPCSPI…ANLISKEDLR (422 aa). The segment at 5433–5829 is adenylation 5; the sequence is SEQAQNQPDA…GRKDGQVKIR (397 aa). The Carrier 5 domain occupies 5957–6033; it reads VASSPVELAL…QLAKNSGLQA (77 aa). O-(pantetheine 4'-phosphoryl)serine is present on Ser5994. Residues 6050 to 6470 form an epimerization 3 region; the sequence is ELSPIQRMFF…CEHSLVMAAH (421 aa). The condensation 5 stretch occupies residues 6512–6856; that stretch reads VEDIYPCTPI…TGISVQNNAS (345 aa). The segment at 6947–7338 is adenylation 6; sequence LRPNSSAIHA…GRKDSQVKVR (392 aa). Positions 7464 to 7540 constitute a Carrier 6 domain; the sequence is LPRTEVEMQL…GLAPSAASQA (77 aa). Ser7501 bears the O-(pantetheine 4'-phosphoryl)serine mark. Positions 7555–7978 are epimerization 4; the sequence is ELSPIQQMFI…LQTAARELPH (424 aa). The tract at residues 8016–8444 is condensation 6; it reads VEDIYPLTPI…QVDLAGRHDQ (429 aa). Positions 8468–8867 are adenylation 7; it reads MQCQQRPDAT…SRKDAQVKIR (400 aa). Positions 8995-9071 constitute a Carrier 7 domain; the sequence is PLTTEMEWRL…DMAHYLREGQ (77 aa). Ser9032 bears the O-(pantetheine 4'-phosphoryl)serine mark. Positions 9111–9454 are condensation 7; the sequence is DVYPTTELQD…DNLEHDAGTS (344 aa).

The protein belongs to the NRP synthetase family.

It functions in the pathway secondary metabolite biosynthesis. In terms of biological role, nonribosomal peptide synthetase; part of the gene cluster that mediates the biosynthesis of the unguisins, gamma-aminobutyric acid (GABA)-containing fungal cyclic heptapeptides with the amino acid sequence cyclo-(D-Ala1-D-Val2-L-Leu3-beta-MePhe4-D-Ala5-D-Trp6-GABA7) for unguisin H and cyclo-(D-Ala1-D-Ala2-L-Leu3-beta-MePhe4-D-Ala5-D-Trp6-GABA7) for unguisin I. UngA' is the main enzyme within the cluster which condenses the 7 residues using its respective 7 modules. The terminal condensation domain (Ct) is involved in cyclization with D-alanine and thereby releasing of unguisins H and I. The alanine racemase ungC' provides D-alanine, which is then accepted by the first adenylation domain of ungA', whereas the methyltransferase ungE' provides the (2R,3R)-beta-methylphenylalanine residue incorporated by the module 4. Finally, the hydrolase ungD' catalyzes the hydrolysis between the D-tryptophan and GABA residues of unguisins H and I to produce the corresponding linear peptides. This Aspergillus campestris (strain IBT 28561) protein is Nonribosomal peptide synthetase ungA'.